The chain runs to 225 residues: MYQQNSETGSLGRVVKGSWSDEEDDLLRKCIQKYGEGNWKRVPERAGLNRCRKSCRWRWLNYLKPSIKRGHFNEDEVKFIIQQHKLLGNRWSLIAAKLPGRTINDVKNYCNTHLYKKHSIENIPAPATNTMTHNTSSCVDRPESSATIKEPKWWENILVELQREEKEGKSQNCSGLDFEQDNLGQQDPNINDGMDQWLNSLKEVPNLSYQWEENLLDFDVVNLWA.

HTH myb-type domains are found at residues Leu11 to Ile67 and Lys68 to His118. DNA-binding regions (H-T-H motif) lie at residues Trp39–Leu63 and Trp91–Leu114.

In terms of assembly, no interactions with bHLH.

It is found in the nucleus. Functionally, activates DODA1 and CYP76AD1 in the betalain red pigment pathway. This chain is Transcription factor MYB1, found in Beta vulgaris (Sugar beet).